The chain runs to 322 residues: Acetyl-coenzyme A carboxylase carboxyl transferase subunit alpha (322 aa).

The CoA carboxyltransferase C-terminal domain occupies 39 to 293; that stretch reads RLQKKSQALT…RRALTDTLAE (255 aa).

Belongs to the AccA family. Acetyl-CoA carboxylase is a heterohexamer composed of biotin carboxyl carrier protein (AccB), biotin carboxylase (AccC) and two subunits each of ACCase subunit alpha (AccA) and ACCase subunit beta (AccD).

The protein resides in the cytoplasm. It catalyses the reaction N(6)-carboxybiotinyl-L-lysyl-[protein] + acetyl-CoA = N(6)-biotinyl-L-lysyl-[protein] + malonyl-CoA. Its pathway is lipid metabolism; malonyl-CoA biosynthesis; malonyl-CoA from acetyl-CoA: step 1/1. Its function is as follows. Component of the acetyl coenzyme A carboxylase (ACC) complex. First, biotin carboxylase catalyzes the carboxylation of biotin on its carrier protein (BCCP) and then the CO(2) group is transferred by the carboxyltransferase to acetyl-CoA to form malonyl-CoA. This is Acetyl-coenzyme A carboxylase carboxyl transferase subunit alpha from Thiobacillus denitrificans (strain ATCC 25259 / T1).